The primary structure comprises 514 residues: 1,25-dihydroxyvitamin D(3) 24-hydroxylase, mitochondrial (514 aa).

The N-terminal 35 residues, 1–35 (MSCPIDKRRPLIAFLRRLRDLGQPPRSVTSKAHVK), are a transit peptide targeting the mitochondrion. Heme is bound at residue Cys-462.

This sequence belongs to the cytochrome P450 family. The cofactor is heme.

The protein localises to the mitochondrion. It catalyses the reaction calcitriol + 2 reduced [adrenodoxin] + O2 + 2 H(+) = calcitetrol + 2 oxidized [adrenodoxin] + H2O. The catalysed reaction is calcitetrol + 2 reduced [adrenodoxin] + O2 + 2 H(+) = (1S)-1,25-dihydroxy-24-oxocalciol + 2 oxidized [adrenodoxin] + 2 H2O. It carries out the reaction (1S)-1,25-dihydroxy-24-oxocalciol + 2 reduced [adrenodoxin] + O2 + 2 H(+) = (1S)-1,23,25-trihydroxy-24-oxocalciol + 2 oxidized [adrenodoxin] + H2O. The enzyme catalyses (1S)-1,23-dihydroxy-24,25,26,27-tetranorcalciol + 2 reduced [adrenodoxin] + O2 + 2 H(+) = (1S)-1-hydroxy-23-oxo-24,25,26,27-tetranorcalciol + 2 oxidized [adrenodoxin] + 2 H2O. It catalyses the reaction (1S)-1-hydroxy-23-oxo-24,25,26,27-tetranorcalciol + 2 reduced [adrenodoxin] + O2 + H(+) = calcitroate + 2 oxidized [adrenodoxin] + H2O. The catalysed reaction is calcidiol + 2 reduced [adrenodoxin] + O2 + 2 H(+) = secalciferol + 2 oxidized [adrenodoxin] + H2O. It carries out the reaction secalciferol + 2 reduced [adrenodoxin] + O2 + 2 H(+) = 25-hydroxy-24-oxocalciol + 2 oxidized [adrenodoxin] + 2 H2O. The enzyme catalyses 25-hydroxy-24-oxocalciol + 2 reduced [adrenodoxin] + O2 + 2 H(+) = 23S,25-dihydroxy-24-oxocholecalciferol + 2 oxidized [adrenodoxin] + H2O. It catalyses the reaction 20S,23-dihydroxycholecalciferol + 2 reduced [adrenodoxin] + O2 + 2 H(+) = 20S,23,25-trihydroxycholecalciferol + 2 oxidized [adrenodoxin] + H2O. The catalysed reaction is 20S,23-dihydroxycholecalciferol + 2 reduced [adrenodoxin] + O2 + 2 H(+) = 20S,23,24-trihydroxycholecalciferol + 2 oxidized [adrenodoxin] + H2O. It carries out the reaction 20S-hydroxycholecalciferol + 2 reduced [adrenodoxin] + O2 + 2 H(+) = 20S,25-dihydroxycholecalciferol + 2 oxidized [adrenodoxin] + H2O. The enzyme catalyses 20S-hydroxycholecalciferol + 2 reduced [adrenodoxin] + O2 + 2 H(+) = 20S,24S-dihydroxycholecalciferol + 2 oxidized [adrenodoxin] + H2O. It catalyses the reaction 20S-hydroxycholecalciferol + 2 reduced [adrenodoxin] + O2 + 2 H(+) = 20S,24R-dihydroxycholecalciferol + 2 oxidized [adrenodoxin] + H2O. A cytochrome P450 monooxygenase with a key role in vitamin D catabolism and calcium homeostasis. Via C24-oxidation pathway, catalyzes the inactivation of both the vitamin D precursor calcidiol (25-hydroxyvitamin D(3)) and the active hormone calcitriol (1-alpha,25-dihydroxyvitamin D(3)). With initial hydroxylation at C-24 (via C24-oxidation pathway), performs a sequential 6-step oxidation of calcitriol leading to the formation of the biliary metabolite calcitroic acid. Hydroxylates at C-24 or C-25 other vitamin D active metabolites, such as CYP11A1-derived secosteroids 20S-hydroxycholecalciferol and 20S,23-dihydroxycholecalciferol. Mechanistically, uses molecular oxygen inserting one oxygen atom into a substrate, and reducing the second into a water molecule, with two electrons provided by NADPH via FDXR/adrenodoxin reductase and FDX1/adrenodoxin. This chain is 1,25-dihydroxyvitamin D(3) 24-hydroxylase, mitochondrial, found in Mus musculus (Mouse).